Consider the following 224-residue polypeptide: Cell division protein SepF (224 aa).

Residues 21-78 (DDYYEDDDRGPAPRGYRRPREDRFEDEGYAPRGYDGHPEDRRRDYDEPPAYRAGLAGG) form a disordered region. A compositionally biased stretch (basic and acidic residues) spans 54–66 (YDGHPEDRRRDYD).

Belongs to the SepF family. As to quaternary structure, homodimer. Interacts with FtsZ.

It localises to the cytoplasm. Functionally, cell division protein that is part of the divisome complex and is recruited early to the Z-ring. Probably stimulates Z-ring formation, perhaps through the cross-linking of FtsZ protofilaments. Its function overlaps with FtsA. The chain is Cell division protein SepF from Mycolicibacterium gilvum (strain PYR-GCK) (Mycobacterium gilvum (strain PYR-GCK)).